The chain runs to 283 residues: Phosphatidylserine decarboxylase proenzyme (283 aa).

Catalysis depends on charge relay system; for autoendoproteolytic cleavage activity residues Asp-89, His-146, and Ser-249. Catalysis depends on Ser-249, which acts as the Schiff-base intermediate with substrate; via pyruvic acid; for decarboxylase activity. Position 249 is a pyruvic acid (Ser); by autocatalysis (Ser-249).

Belongs to the phosphatidylserine decarboxylase family. PSD-B subfamily. Prokaryotic type I sub-subfamily. In terms of assembly, heterodimer of a large membrane-associated beta subunit and a small pyruvoyl-containing alpha subunit. Requires pyruvate as cofactor. In terms of processing, is synthesized initially as an inactive proenzyme. Formation of the active enzyme involves a self-maturation process in which the active site pyruvoyl group is generated from an internal serine residue via an autocatalytic post-translational modification. Two non-identical subunits are generated from the proenzyme in this reaction, and the pyruvate is formed at the N-terminus of the alpha chain, which is derived from the carboxyl end of the proenzyme. The autoendoproteolytic cleavage occurs by a canonical serine protease mechanism, in which the side chain hydroxyl group of the serine supplies its oxygen atom to form the C-terminus of the beta chain, while the remainder of the serine residue undergoes an oxidative deamination to produce ammonia and the pyruvoyl prosthetic group on the alpha chain. During this reaction, the Ser that is part of the protease active site of the proenzyme becomes the pyruvoyl prosthetic group, which constitutes an essential element of the active site of the mature decarboxylase.

The protein resides in the cell membrane. The enzyme catalyses a 1,2-diacyl-sn-glycero-3-phospho-L-serine + H(+) = a 1,2-diacyl-sn-glycero-3-phosphoethanolamine + CO2. The protein operates within phospholipid metabolism; phosphatidylethanolamine biosynthesis; phosphatidylethanolamine from CDP-diacylglycerol: step 2/2. Its function is as follows. Catalyzes the formation of phosphatidylethanolamine (PtdEtn) from phosphatidylserine (PtdSer). The polypeptide is Phosphatidylserine decarboxylase proenzyme (Legionella pneumophila (strain Lens)).